We begin with the raw amino-acid sequence, 993 residues long: ATP-dependent DNA helicase MPH1 (993 aa).

A Helicase ATP-binding domain is found at 94–261 (IVHKSLFQNT…EVVNNLDISK (168 aa)). Residue 107–114 (IPTGMGKT) coordinates ATP. The DEAH box motif lies at 209-212 (DEAH). Positions 507–655 (KVERLHRQEQ…CIDYKKSDRI (149 aa)) constitute a Helicase C-terminal domain. Positions 530–551 (NDKLERSARRTGSSEEAQISGM) are disordered. A compositionally biased stretch (polar residues) spans 539 to 551 (RTGSSEEAQISGM).

This sequence belongs to the DEAD box helicase family. DEAH subfamily. FANCM sub-subfamily. As to quaternary structure, interacts with the MHF histone-fold complex to form the FANCM-MHF complex.

The protein resides in the nucleus. The enzyme catalyses ATP + H2O = ADP + phosphate + H(+). Its function is as follows. ATP-dependent DNA helicase involved in DNA damage repair by homologous recombination and in genome maintenance. Capable of unwinding D-loops. Plays a role in limiting crossover recombinants during mitotic DNA double-strand break (DSB) repair. Component of a FANCM-MHF complex which promotes gene conversion at blocked replication forks, probably by reversal of the stalled fork. The polypeptide is ATP-dependent DNA helicase MPH1 (Saccharomyces cerevisiae (strain YJM789) (Baker's yeast)).